The chain runs to 214 residues: Ribosomal RNA small subunit methyltransferase G (214 aa).

S-adenosyl-L-methionine contacts are provided by residues Gly77, Phe82, 128 to 129 (VE), and Arg143.

It belongs to the methyltransferase superfamily. RNA methyltransferase RsmG family.

It is found in the cytoplasm. The catalysed reaction is guanosine(527) in 16S rRNA + S-adenosyl-L-methionine = N(7)-methylguanosine(527) in 16S rRNA + S-adenosyl-L-homocysteine. Specifically methylates the N7 position of guanine in position 527 of 16S rRNA. The protein is Ribosomal RNA small subunit methyltransferase G of Nitrosomonas europaea (strain ATCC 19718 / CIP 103999 / KCTC 2705 / NBRC 14298).